The following is a 749-amino-acid chain: MGRVVGIDLGTTNSVIAVMEGGKPMVIANAEGVRTTPSVVGVSKTGERLVGELARRQLVLNPRNTFANIKRFIGRRYDELTDESKRVPYTVRRDPEGNVRIVCPQLSREFAPEEVAAMILRKLAEEASRYLGEPVTGAVITVPAYFNDSQRQATRDAGRIAGLEVKRILNEPTAASLAYGLDRRDNQTILVFDLGGGTFDVSVLEVGNGVFEVKATSGDTQLGGNDFDRRIVDWLAEQFLEAEGIDLRRDRQALQRLIEAAEKAKIELSGVSVTDINLPFITATEDEPKHLETRLTRSEFEALCEDLLERMMRPLRRALKDARLQPQDIDEVVLVGGSTRMPMVQQLVRSLIGREPNQNVNPDEVVAIGAAIQAGILAGEVKDILLLDVTPLSLGLETIGGVMKKLIPRNTAIPVRRSDIFSTAENNQTMVEIHILQGERQLAEGNKSLGRFKLTGIPPAPRGVPQVQVSFDIDANGILQVSALDKTTGREQTVTIQGASTLSQEEVKRMMKDAELYAQQDRQLKARIEKRNRAQTLIAQSERRLREISLDFGLYFAESKRRRIESTIRELKDYLERQDDRGLDLALAELQDALFDLNQETAARLRDEEGEGFFEPLKQTFASLRGDGNRDFERSWDDRGGDRWDADPWDRSRRSTPSYGYDDRRSPVSDPYRGERWVEEQTSMSRREPVRDRNGGNGSVRPEPAPRRGRPTWEEDQPPRRDRSSQPPAKPASGRRWNDGWDDDDDEWF.

Position 198 is a phosphothreonine; by autocatalysis (Thr198). 3 stretches are compositionally biased toward basic and acidic residues: residues 643–653 (RWDADPWDRSR), 661–694 (YDDRRSPVSDPYRGERWVEEQTSMSRREPVRDRN), and 711–724 (PTWEEDQPPRRDRS). The interval 643-749 (RWDADPWDRS…GWDDDDDEWF (107 aa)) is disordered. Acidic residues predominate over residues 740-749 (GWDDDDDEWF).

Belongs to the heat shock protein 70 family.

Functionally, acts as a chaperone. This chain is Chaperone protein DnaK 1, found in Synechococcus sp. (strain ATCC 27144 / PCC 6301 / SAUG 1402/1) (Anacystis nidulans).